Reading from the N-terminus, the 1989-residue chain is Zinc finger C3H1 domain-containing protein (1989 aa).

Disordered stretches follow at residues 1–133 (MATA…RPSF), 148–218 (GRPY…SKNE), 251–290 (SSKE…PEEK), and 310–365 (LPGD…LGED). N-acetylalanine is present on Ala2. Residues Ser15, Ser28, and Ser34 each carry the phosphoserine modification. Residues 20–32 (GELEDGEISDDDN) are compositionally biased toward acidic residues. Positions 33–44 (NSQIRSRSSSSS) are enriched in low complexity. The span at 62–72 (RGGGSGGGGGS) shows a compositional bias: gly residues. Composition is skewed to low complexity over residues 114 to 132 (PPSV…PRPS), 183 to 192 (GFSSSQSWRE), and 201 to 210 (KSFGRSPSRK). The residue at position 128 (Ser128) is a Phosphoserine. The stretch at 219-259 (NCVEETFEDLLLKYKQIQLELECINKDEKLALSSKEENVQE) forms a coiled coil. Ser251 carries the phosphoserine modification. The segment covering 251 to 262 (SSKEENVQEDPK) has biased composition (basic and acidic residues). Residues 266 to 279 (FEDQTSTDNVSITK) are compositionally biased toward polar residues. Over residues 280-290 (DSSKEVAPEEK) the composition is skewed to basic and acidic residues. Residues 330–340 (KSDTTDSSQGL) are compositionally biased toward polar residues. Ser352 and Ser383 each carry phosphoserine. Positions 358-389 (SEKKLGEDEEELSELQLRLLALQSASKKWQQK) form a coiled coil. 2 disordered regions span residues 385 to 671 (KWQQ…SNLS) and 711 to 770 (LNDS…PEAL). Positions 392 to 402 (QVMKESKEKLT) are enriched in basic and acidic residues. The span at 430–440 (ALRKQQTKAWK) shows a compositional bias: basic residues. Residues 432–487 (RKQQTKAWKKLQQQKEQERQKEEDQRKQAEEEERRKREEEIRKIRDLSNQEEQYNR) are a coiled coil. Composition is skewed to basic and acidic residues over residues 444-479 (QQKE…RDLS) and 501-515 (KSSD…DKQP). The span at 527–537 (NYEEVAMDTDS) shows a compositional bias: acidic residues. The segment covering 574–583 (VSSLPPLSQP) has biased composition (low complexity). Positions 594 to 616 (PLPPLPPLPPLPPEDPEQPPKPP) are enriched in pro residues. Over residues 647–671 (TSSNSDPPSPPVLNNSHPVPRSNLS) the composition is skewed to polar residues. Residues Ser662, Ser714, Ser717, and Ser719 each carry the phosphoserine modification. Over residues 755–770 (PKSEKENDPLRTPEAL) the composition is skewed to basic and acidic residues. Thr766 is subject to Phosphothreonine. Ser805 and Ser809 each carry phosphoserine. A coiled-coil region spans residues 847–909 (LKNLVQQEAK…QQRVTIKKAL (63 aa)). Residues Ser948, Ser949, and Ser953 each carry the phosphoserine modification. Residues 965 to 989 (EKRRLQKLEYEYALKIQKLKEARAL) adopt a coiled-coil conformation. Ser998 and Ser1046 each carry phosphoserine. The C3H1-type zinc finger occupies 1185 to 1206 (FCRFDLTGTCNDDDCQWQHIQD). A phosphoserine mark is found at Ser1301, Ser1303, and Ser1304. TPR repeat units follow at residues 1361-1400 (VQLW…NKDN), 1401-1434 (PEIW…APDY), 1438-1471 (WTFL…ETSN), 1478-1511 (LEAL…ANDG), 1602-1635 (LPLY…CPIN), 1636-1669 (CQLL…NPQN), and 1745-1778 (PYLW…AMRC).

Component of the poly(A) tail exosome targeting (PAXT) complex made of accessory factors, such as PABPN1, ZFC3H1 and MTREX, and which directs a subset of long and polyadenylated poly(A) RNAs for exosomal degradation. Co-localizes with component of the CBC-ARS2 (CBCA) complex. Binds to RNA exosome components. Interacts with NCBP1/CBP80, ZC3H18, MTREX and PABPN1 in a RNase-insensitive manner, and with PABPC4, PABPC1 and ZC3H14 in a RNase-sensitive manner.

It is found in the nucleus. In terms of biological role, subunit of the trimeric poly(A) tail exosome targeting (PAXT) complex, a complex that directs a subset of long and polyadenylated poly(A) RNAs for exosomal degradation. The RNA exosome is fundamental for the degradation of RNA in eukaryotic nuclei. Substrate targeting is facilitated by its cofactor MTREX, which links to RNA-binding protein adapters. This is Zinc finger C3H1 domain-containing protein (ZFC3H1) from Homo sapiens (Human).